The following is a 579-amino-acid chain: Zinc metalloproteinase nas-11 (579 aa).

An N-terminal signal peptide occupies residues 1–17 (MTPSLVFLIVVIVVVEG). The propeptide occupies 18–328 (QGWRPWDRFN…AAPGSSRLKK (311 aa)). A disordered region spans residues 35–58 (WGGNNWGTRQRNQEPHDIPPPVPP). An N-linked (GlcNAc...) asparagine glycan is attached at Asn-256. Over residues 293–312 (GDDEIPLPDADTDDEDDDDS) the composition is skewed to acidic residues. The segment at 293–323 (GDDEIPLPDADTDDEDDDDSTNSASGAAPGS) is disordered. One can recognise a Peptidase M12A domain in the interval 329–536 (SALYFEGNLI…IELLKKMYCQ (208 aa)). Cystine bridges form between Cys-375/Cys-535, Cys-401/Cys-421, Cys-539/Cys-575, Cys-546/Cys-568, and Cys-555/Cys-572. Position 430 (His-430) interacts with Zn(2+). Residue Glu-431 is part of the active site. Positions 434 and 440 each coordinate Zn(2+). A glycan (N-linked (GlcNAc...) asparagine) is linked at Asn-454. The ShKT domain maps to 539 to 575 (CDDKNVYCGAWALKDLCKNPGHDQYMAANCKKSCGLC).

Zn(2+) is required as a cofactor. In terms of tissue distribution, expressed in the anterior part of the intestine, CEP neurons and to a lesser extent in hypodermis.

The protein localises to the secreted. Metalloprotease. The sequence is that of Zinc metalloproteinase nas-11 (nas-11) from Caenorhabditis elegans.